The following is an 82-amino-acid chain: Small ribosomal subunit protein bS18 (82 aa).

The segment at 1 to 24 is disordered; sequence MKRTNMKKARMEQSRRPKKNPLKA.

This sequence belongs to the bacterial ribosomal protein bS18 family. Part of the 30S ribosomal subunit. Forms a tight heterodimer with protein bS6.

Functionally, binds as a heterodimer with protein bS6 to the central domain of the 16S rRNA, where it helps stabilize the platform of the 30S subunit. The sequence is that of Small ribosomal subunit protein bS18 from Corynebacterium jeikeium (strain K411).